The following is a 592-amino-acid chain: Vacuolin-B (592 aa).

The segment covering 1–30 has biased composition (polar residues); it reads MIESSSFMKKTSSENSIGSRSNIHEASTFS. Residues 1–35 form a disordered region; sequence MIESSSFMKKTSSENSIGSRSNIHEASTFSSEHEN. A coiled-coil region spans residues 480-534; it reads KTTEARLKAETDNIALEQKGKAIIAEAQAKLESAQKQAQALLITAEAQKKVQEMQ. The tract at residues 491-555 is oligomerization domain; sequence DNIALEQKGK…EIELAKIKSE (65 aa).

This sequence belongs to the vacuolin family. As to quaternary structure, homotrimer.

It localises to the endosome membrane. It is found in the lysosome membrane. In terms of biological role, negative regulator of late steps of the endocytic pathway. The chain is Vacuolin-B (vacB) from Dictyostelium discoideum (Social amoeba).